Consider the following 710-residue polypeptide: Protein Smaug homolog 1 (710 aa).

Disordered stretches follow at residues 276–319 (ARGS…FQDE) and 441–476 (NQAT…ESDL). Residues 309–318 (QSTACNTFQD) show a composition bias toward polar residues. The region spanning 319 to 379 (EGSGMKDVPA…KIVISIQKLK (61 aa)) is the SAM domain.

Belongs to the SMAUG family.

The protein resides in the cytoplasm. Its subcellular location is the cell projection. It localises to the dendrite. It is found in the synapse. The protein localises to the synaptosome. Acts as a translational repressor. This Xenopus laevis (African clawed frog) protein is Protein Smaug homolog 1 (samd4a).